Consider the following 78-residue polypeptide: MNPIVEFCISNLAKGGDYVYNQLENDPGIDVLEYGCLQNCGICSSGLYALVNGDIVEGESPDDLLQKIYAHIEETWIF.

Belongs to the UPF0349 family.

This Staphylococcus saprophyticus subsp. saprophyticus (strain ATCC 15305 / DSM 20229 / NCIMB 8711 / NCTC 7292 / S-41) protein is UPF0349 protein SSP1836.